Consider the following 384-residue polypeptide: Formate-dependent phosphoribosylglycinamide formyltransferase (384 aa).

N(1)-(5-phospho-beta-D-ribosyl)glycinamide-binding positions include 14–15 and E74; that span reads EL. Residues R106, K147, 152-157, 187-190, and E195 each bind ATP; these read SSGKGQ and EEFI. In terms of domain architecture, ATP-grasp spans 111 to 300; it reads RLAAETLHLP…EFALHVRAVL (190 aa). Mg(2+)-binding residues include E259 and E271. Residues D278, K348, and 355 to 356 contribute to the N(1)-(5-phospho-beta-D-ribosyl)glycinamide site; that span reads RR.

It belongs to the PurK/PurT family. In terms of assembly, homodimer.

The catalysed reaction is N(1)-(5-phospho-beta-D-ribosyl)glycinamide + formate + ATP = N(2)-formyl-N(1)-(5-phospho-beta-D-ribosyl)glycinamide + ADP + phosphate + H(+). Its pathway is purine metabolism; IMP biosynthesis via de novo pathway; N(2)-formyl-N(1)-(5-phospho-D-ribosyl)glycinamide from N(1)-(5-phospho-D-ribosyl)glycinamide (formate route): step 1/1. Involved in the de novo purine biosynthesis. Catalyzes the transfer of formate to 5-phospho-ribosyl-glycinamide (GAR), producing 5-phospho-ribosyl-N-formylglycinamide (FGAR). Formate is provided by PurU via hydrolysis of 10-formyl-tetrahydrofolate. In Bacillus velezensis (strain DSM 23117 / BGSC 10A6 / LMG 26770 / FZB42) (Bacillus amyloliquefaciens subsp. plantarum), this protein is Formate-dependent phosphoribosylglycinamide formyltransferase.